We begin with the raw amino-acid sequence, 464 residues long: Argininosuccinate lyase (464 aa).

Belongs to the lyase 1 family. Argininosuccinate lyase subfamily.

The protein localises to the cytoplasm. It catalyses the reaction 2-(N(omega)-L-arginino)succinate = fumarate + L-arginine. It participates in amino-acid biosynthesis; L-arginine biosynthesis; L-arginine from L-ornithine and carbamoyl phosphate: step 3/3. In Pseudomonas syringae pv. tomato (strain ATCC BAA-871 / DC3000), this protein is Argininosuccinate lyase.